Here is a 255-residue protein sequence, read N- to C-terminus: 5-oxoprolinase subunit A (255 aa).

It belongs to the LamB/PxpA family. As to quaternary structure, forms a complex composed of PxpA, PxpB and PxpC.

The enzyme catalyses 5-oxo-L-proline + ATP + 2 H2O = L-glutamate + ADP + phosphate + H(+). In terms of biological role, catalyzes the cleavage of 5-oxoproline to form L-glutamate coupled to the hydrolysis of ATP to ADP and inorganic phosphate. The protein is 5-oxoprolinase subunit A of Clostridium kluyveri (strain ATCC 8527 / DSM 555 / NBRC 12016 / NCIMB 10680 / K1).